A 421-amino-acid chain; its full sequence is Protein OS-9 homolog (421 aa).

An N-terminal signal peptide occupies residues 1 to 26 (MWRWSTGVRTMLGYAMCFLALGSALT). One can recognise an MRH domain in the interval 99–220 (EEATVGKKLE…LVSIPSLCEL (122 aa)). Tryptophan 115 serves as a coordination point for a mannooligosaccharide derivative. N-linked (GlcNAc...) asparagine glycosylation is present at asparagine 125. 2 disulfides stabilise this stretch: cysteine 173–cysteine 206 and cysteine 188–cysteine 218. The a mannooligosaccharide derivative site is built by arginine 180, glutamate 202, and tyrosine 208. N-linked (GlcNAc...) asparagine glycosylation is found at asparagine 271 and asparagine 332. Residues 375-394 (GNSEDYEQQAPEQLDEEEAE) are compositionally biased toward acidic residues. The segment at 375 to 403 (GNSEDYEQQAPEQLDEEEAELTSQSDDPA) is disordered.

The protein belongs to the OS-9 family. Interacts with missfolded ER lumenal proteins.

The protein localises to the endoplasmic reticulum membrane. In terms of biological role, lectin involved in the quality control of the secretory pathway. As a member of the endoplasmic reticulum-associated degradation lumenal (ERAD-L) surveillance system, targets misfolded endoplasmic reticulum lumenal glycoproteins for degradation. This chain is Protein OS-9 homolog (YOS9), found in Eremothecium gossypii (strain ATCC 10895 / CBS 109.51 / FGSC 9923 / NRRL Y-1056) (Yeast).